The sequence spans 207 residues: Inhibitor of hydrogen peroxide resistance (207 aa).

Residues 163–182 constitute a DNA-binding region (H-T-H motif); it reads MNYIHQRTRISRSVVAEVLA.

It belongs to the IprA family.

Functionally, involved in oxidative stress resistance. This is Inhibitor of hydrogen peroxide resistance from Escherichia coli O157:H7.